A 396-amino-acid polypeptide reads, in one-letter code: Formate-dependent phosphoribosylglycinamide formyltransferase (396 aa).

N(1)-(5-phospho-beta-D-ribosyl)glycinamide is bound by residues 24-25 (EL) and E84. ATP-binding positions include R116, K157, 162–167 (SSGKGQ), 197–200 (EGFV), and E205. One can recognise an ATP-grasp domain in the interval 121–310 (RLAAETLGIK…EFALHVRAIL (190 aa)). Positions 269 and 281 each coordinate Mg(2+). N(1)-(5-phospho-beta-D-ribosyl)glycinamide is bound by residues D288, K359, and 366–367 (RR).

This sequence belongs to the PurK/PurT family. As to quaternary structure, homodimer.

It carries out the reaction N(1)-(5-phospho-beta-D-ribosyl)glycinamide + formate + ATP = N(2)-formyl-N(1)-(5-phospho-beta-D-ribosyl)glycinamide + ADP + phosphate + H(+). Its pathway is purine metabolism; IMP biosynthesis via de novo pathway; N(2)-formyl-N(1)-(5-phospho-D-ribosyl)glycinamide from N(1)-(5-phospho-D-ribosyl)glycinamide (formate route): step 1/1. Functionally, involved in the de novo purine biosynthesis. Catalyzes the transfer of formate to 5-phospho-ribosyl-glycinamide (GAR), producing 5-phospho-ribosyl-N-formylglycinamide (FGAR). Formate is provided by PurU via hydrolysis of 10-formyl-tetrahydrofolate. This is Formate-dependent phosphoribosylglycinamide formyltransferase from Psychromonas ingrahamii (strain DSM 17664 / CCUG 51855 / 37).